Reading from the N-terminus, the 437-residue chain is Phosphoribosylamine--glycine ligase (437 aa).

Positions 109 to 316 (KDFLARHGIP…LLDLIEAALN (208 aa)) constitute an ATP-grasp domain. Position 135 to 196 (135 to 196 (VRQQGAPIVI…EEYLDGEEAS (62 aa))) interacts with ATP. Glu286 and Asn288 together coordinate Mg(2+).

It belongs to the GARS family. Requires Mg(2+) as cofactor. The cofactor is Mn(2+).

The enzyme catalyses 5-phospho-beta-D-ribosylamine + glycine + ATP = N(1)-(5-phospho-beta-D-ribosyl)glycinamide + ADP + phosphate + H(+). The protein operates within purine metabolism; IMP biosynthesis via de novo pathway; N(1)-(5-phospho-D-ribosyl)glycinamide from 5-phospho-alpha-D-ribose 1-diphosphate: step 2/2. The sequence is that of Phosphoribosylamine--glycine ligase from Xylella fastidiosa (strain 9a5c).